The primary structure comprises 337 residues: Outer membrane protein assembly factor BamC (337 aa).

An N-terminal signal peptide occupies residues M1–G16. C17 carries the N-palmitoyl cysteine lipid modification. A lipid anchor (S-diacylglycerol cysteine) is attached at C17.

It belongs to the BamC family. In terms of assembly, part of the Bam complex.

It is found in the cell outer membrane. Part of the outer membrane protein assembly complex, which is involved in assembly and insertion of beta-barrel proteins into the outer membrane. The polypeptide is Outer membrane protein assembly factor BamC (Pasteurella multocida (strain Pm70)).